The primary structure comprises 208 residues: Small ribosomal subunit protein uS4 (208 aa).

Residues 97–160 (TRLDNVCYRM…QKQLRVQEAL (64 aa)) enclose the S4 RNA-binding domain.

This sequence belongs to the universal ribosomal protein uS4 family. In terms of assembly, part of the 30S ribosomal subunit. Contacts protein S5. The interaction surface between S4 and S5 is involved in control of translational fidelity.

One of the primary rRNA binding proteins, it binds directly to 16S rRNA where it nucleates assembly of the body of the 30S subunit. Functionally, with S5 and S12 plays an important role in translational accuracy. This Xanthomonas axonopodis pv. citri (strain 306) protein is Small ribosomal subunit protein uS4.